The following is a 987-amino-acid chain: Ephrin type-B receptor 2 (987 aa).

An N-terminal signal peptide occupies residues 1–19; the sequence is MGPLWFCCLPLALLPLLAA. At 20-544 the chain is on the extracellular side; it reads VEETLMDSTT…QTSVQEKLPL (525 aa). Positions 21–203 constitute an Eph LBD domain; it reads EETLMDSTTA…FYRKCPRVIQ (183 aa). 2 disulfides stabilise this stretch: Cys63–Cys185 and Cys98–Cys108. Asn266, Asn337, Asn429, Asn478, and Asn483 each carry an N-linked (GlcNAc...) asparagine glycan. Fibronectin type-III domains follow at residues 325–435 and 436–531; these read IPSA…TNQA and APSA…TMTE. Residues 545 to 565 form a helical membrane-spanning segment; it reads IIGSSAAGLVFLIAVVVIIIV. Over 566–987 the chain is Cytoplasmic; that stretch reads CNRRGFERAD…QMNQIQSVEV (422 aa). The 264-residue stretch at 622–885 folds into the Protein kinase domain; it reads VKIEQVIGAG…QIVNTLDKMI (264 aa). Residues 628–636 and Lys654 each bind ATP; that span reads IGAGEFGEV. Residue Asp747 is the Proton acceptor of the active site. A Glycyl lysine isopeptide (Lys-Gly) (interchain with G-Cter in ubiquitin) cross-link involves residue Lys892. The 65-residue stretch at 914 to 978 folds into the SAM domain; sequence TSFNTVDEWL…LNSIQVMRAQ (65 aa). The PDZ-binding motif lies at 985-987; it reads VEV.

The protein belongs to the protein kinase superfamily. Tyr protein kinase family. Ephrin receptor subfamily. In terms of assembly, heterotetramer upon binding of the ligand. The heterotetramer is composed of an ephrin dimer and a receptor dimer. Oligomerization is probably required to induce biological responses. In terms of processing, ligand binding induces cleavage by matrix metalloproteinases (MMPs) such as MMP7/MMP9, producing an EphB2/N-terminal fragment (NTF) and a C-terminal long fragment (EphB2-LF). EphB2-LF is further cleaved by MMPs, producing EphB2/CTF1 which is further cleaved by the PS1/gamma-secretase producing EphB2/CTF2. Post-translationally, polyubiquitinated; ligand binding stimulates ubiquitination. Ubiquitinated by RNF186 at Lys-892, mainly through 'Lys-27'-linked polyubiquitin chains.

It localises to the cell membrane. The protein resides in the cell projection. Its subcellular location is the axon. It is found in the dendrite. It catalyses the reaction L-tyrosyl-[protein] + ATP = O-phospho-L-tyrosyl-[protein] + ADP + H(+). Receptor tyrosine kinase which binds promiscuously transmembrane ephrin-B family ligands residing on adjacent cells, leading to contact-dependent bidirectional signaling into neighboring cells. The signaling pathway downstream of the receptor is referred to as forward signaling while the signaling pathway downstream of the ephrin ligand is referred to as reverse signaling. Functions in axon guidance during development. In addition to axon guidance, also regulates dendritic spines development and maturation and stimulates the formation of excitatory synapses. This Coturnix japonica (Japanese quail) protein is Ephrin type-B receptor 2 (EPHB2).